An 89-amino-acid polypeptide reads, in one-letter code: Phosphocarrier protein HPr (89 aa).

An HPr domain is found at 1–88 (MLQRDTTIIN…ALIANRFGEG (88 aa)). Catalysis depends on His-15, which acts as the Pros-phosphohistidine intermediate.

It belongs to the HPr family.

Its subcellular location is the cytoplasm. Functionally, general (non sugar-specific) component of the phosphoenolpyruvate-dependent sugar phosphotransferase system (sugar PTS). This major carbohydrate active-transport system catalyzes the phosphorylation of incoming sugar substrates concomitantly with their translocation across the cell membrane. The phosphoryl group from phosphoenolpyruvate (PEP) is transferred to the phosphoryl carrier protein HPr by enzyme I. Phospho-HPr then transfers it to the PTS EIIA domain. This chain is Phosphocarrier protein HPr (phbH), found in Cupriavidus necator (strain ATCC 17699 / DSM 428 / KCTC 22496 / NCIMB 10442 / H16 / Stanier 337) (Ralstonia eutropha).